Reading from the N-terminus, the 196-residue chain is Large ribosomal subunit protein eL15 (196 aa).

The disordered stretch occupies residues 159 to 196; sequence RAYRGRTSAGQRGRGQQKRGKGTEHTRPSIRANDKRGK. Over residues 179–196 the composition is skewed to basic and acidic residues; the sequence is KGTEHTRPSIRANDKRGK.

Belongs to the eukaryotic ribosomal protein eL15 family.

This chain is Large ribosomal subunit protein eL15, found in Natronomonas pharaonis (strain ATCC 35678 / DSM 2160 / CIP 103997 / JCM 8858 / NBRC 14720 / NCIMB 2260 / Gabara) (Halobacterium pharaonis).